We begin with the raw amino-acid sequence, 252 residues long: 3-dehydroquinate dehydratase (252 aa).

3-dehydroquinate contacts are provided by residues serine 21, 46–48 (EWR), and arginine 82. Catalysis depends on histidine 143, which acts as the Proton donor/acceptor. Catalysis depends on lysine 170, which acts as the Schiff-base intermediate with substrate. 3-dehydroquinate-binding residues include arginine 213, serine 232, and glutamine 236.

The protein belongs to the type-I 3-dehydroquinase family. In terms of assembly, homodimer.

The enzyme catalyses 3-dehydroquinate = 3-dehydroshikimate + H2O. It functions in the pathway metabolic intermediate biosynthesis; chorismate biosynthesis; chorismate from D-erythrose 4-phosphate and phosphoenolpyruvate: step 3/7. In terms of biological role, involved in the third step of the chorismate pathway, which leads to the biosynthesis of aromatic amino acids. Catalyzes the cis-dehydration of 3-dehydroquinate (DHQ) and introduces the first double bond of the aromatic ring to yield 3-dehydroshikimate. The protein is 3-dehydroquinate dehydratase of Shigella dysenteriae.